The following is a 405-amino-acid chain: Sesquiterpene synthase 16 (405 aa).

Residues Asp-155, Asp-159, and Glu-309 each coordinate Mg(2+). The short motif at 155 to 159 (DDTYD) is the DDXXD motif element.

It belongs to the terpene synthase family. Tpsa subfamily. It depends on Mg(2+) as a cofactor. The cofactor is Mn(2+).

The protein operates within secondary metabolite biosynthesis; terpenoid biosynthesis. Its function is as follows. Sesquiterpene synthase involved in the biosynthesis of volatile compounds. No activity detected with geranyl diphosphate (GPP) and farnesyl diphosphate (FPP) as substrates. The protein is Sesquiterpene synthase 16 of Solanum habrochaites (Wild tomato).